The following is a 254-amino-acid chain: Putative electron transfer flavoprotein subunit YdiQ (254 aa).

The protein belongs to the ETF beta-subunit/FixA family. As to quaternary structure, ydiR and YdiQ form a heterodimer.

Functionally, may play a role in a redox process. This Escherichia coli (strain K12) protein is Putative electron transfer flavoprotein subunit YdiQ (ydiQ).